A 279-amino-acid polypeptide reads, in one-letter code: Pantothenate synthetase (279 aa).

30-37 serves as a coordination point for ATP; the sequence is MGALHAGH. The active-site Proton donor is the H37. Residue Q61 participates in (R)-pantoate binding. Q61 contributes to the beta-alanine binding site. 147–150 lines the ATP pocket; the sequence is GEKD. Q153 provides a ligand contact to (R)-pantoate. ATP-binding positions include A176 and 184 to 187; that span reads LSSR.

It belongs to the pantothenate synthetase family. In terms of assembly, homodimer.

The protein localises to the cytoplasm. The enzyme catalyses (R)-pantoate + beta-alanine + ATP = (R)-pantothenate + AMP + diphosphate + H(+). It functions in the pathway cofactor biosynthesis; (R)-pantothenate biosynthesis; (R)-pantothenate from (R)-pantoate and beta-alanine: step 1/1. Catalyzes the condensation of pantoate with beta-alanine in an ATP-dependent reaction via a pantoyl-adenylate intermediate. In Sphingopyxis alaskensis (strain DSM 13593 / LMG 18877 / RB2256) (Sphingomonas alaskensis), this protein is Pantothenate synthetase.